Consider the following 120-residue polypeptide: NAD(P)H-quinone oxidoreductase subunit 3, chloroplastic (120 aa).

Transmembrane regions (helical) follow at residues 7-27 (YNYF…AFSI), 64-84 (MFAL…PWAM), and 89-109 (LGIP…IGLI).

The protein belongs to the complex I subunit 3 family. As to quaternary structure, NDH is composed of at least 16 different subunits, 5 of which are encoded in the nucleus.

It localises to the plastid. Its subcellular location is the chloroplast thylakoid membrane. The catalysed reaction is a plastoquinone + NADH + (n+1) H(+)(in) = a plastoquinol + NAD(+) + n H(+)(out). It carries out the reaction a plastoquinone + NADPH + (n+1) H(+)(in) = a plastoquinol + NADP(+) + n H(+)(out). NDH shuttles electrons from NAD(P)H:plastoquinone, via FMN and iron-sulfur (Fe-S) centers, to quinones in the photosynthetic chain and possibly in a chloroplast respiratory chain. The immediate electron acceptor for the enzyme in this species is believed to be plastoquinone. Couples the redox reaction to proton translocation, and thus conserves the redox energy in a proton gradient. This chain is NAD(P)H-quinone oxidoreductase subunit 3, chloroplastic, found in Anthoceros angustus (Hornwort).